The sequence spans 429 residues: Multifunctional CCA protein (429 aa).

ATP is bound by residues G27 and R30. G27 and R30 together coordinate CTP. Residues D40 and D42 each coordinate Mg(2+). 3 residues coordinate ATP: R110, R162, and R165. Positions 110, 162, and 165 each coordinate CTP. One can recognise an HD domain in the interval 251 to 352 (TGVHTMMVVD…VRLLERCDAL (102 aa)).

It belongs to the tRNA nucleotidyltransferase/poly(A) polymerase family. Bacterial CCA-adding enzyme type 1 subfamily. As to quaternary structure, monomer. Can also form homodimers and oligomers. Mg(2+) is required as a cofactor. It depends on Ni(2+) as a cofactor.

The catalysed reaction is a tRNA precursor + 2 CTP + ATP = a tRNA with a 3' CCA end + 3 diphosphate. It carries out the reaction a tRNA with a 3' CCA end + 2 CTP + ATP = a tRNA with a 3' CCACCA end + 3 diphosphate. Catalyzes the addition and repair of the essential 3'-terminal CCA sequence in tRNAs without using a nucleic acid template. Adds these three nucleotides in the order of C, C, and A to the tRNA nucleotide-73, using CTP and ATP as substrates and producing inorganic pyrophosphate. tRNA 3'-terminal CCA addition is required both for tRNA processing and repair. Also involved in tRNA surveillance by mediating tandem CCA addition to generate a CCACCA at the 3' terminus of unstable tRNAs. While stable tRNAs receive only 3'-terminal CCA, unstable tRNAs are marked with CCACCA and rapidly degraded. The polypeptide is Multifunctional CCA protein (Ralstonia nicotianae (strain ATCC BAA-1114 / GMI1000) (Ralstonia solanacearum)).